A 924-amino-acid polypeptide reads, in one-letter code: Aminopeptidase 2 (924 aa).

The N-terminal stretch at Met1–Leu45 is a signal peptide. Residues Leu46–Leu57 constitute a propeptide that is removed on maturation. An N-acetylserine; partial modification is found at Ser58. N-linked (GlcNAc...) asparagine glycosylation occurs at Asn92. Glu194 provides a ligand contact to substrate. Asn229 carries an N-linked (GlcNAc...) asparagine glycan. Residue Gly327 to Asn331 participates in substrate binding. His363 lines the Zn(2+) pocket. Glu364 (proton acceptor) is an active-site residue. Residues His367 and Glu386 each coordinate Zn(2+).

This sequence belongs to the peptidase M1 family. Zn(2+) is required as a cofactor.

The protein localises to the secreted. Its subcellular location is the cell wall. Its activity is regulated as follows. Inactivated by metal-chelating agents phenanthroline and EDTA. Inhibited by bestatin, an aminopeptidase inhibitor. Not inhibited by pepstatin A and PMSF, inhibitors of aspartic and the serine proteases, respectively. Not inhibited by carboxypeptidase inhibitor. In terms of biological role, metalloprotease that specifically hydrolyzes peptides with N-terminal alanine, arginine and leucine residues. This chain is Aminopeptidase 2 (APE2), found in Candida albicans (strain SC5314 / ATCC MYA-2876) (Yeast).